Reading from the N-terminus, the 144-residue chain is AP-4 complex subunit sigma-1 (144 aa).

The protein belongs to the adaptor complexes small subunit family. Adaptor protein complex 4 (AP-4) is a heterotetramer composed of two large adaptins (epsilon-type subunit AP4E1 and beta-type subunit AP4B1), a medium adaptin (mu-type subunit AP4M1) and a small adaptin (sigma-type AP4S1).

The protein resides in the golgi apparatus. It localises to the trans-Golgi network membrane. In terms of biological role, component of the adaptor protein complex 4 (AP-4). Adaptor protein complexes are vesicle coat components involved both in vesicle formation and cargo selection. They control the vesicular transport of proteins in different trafficking pathways. AP-4 forms a non clathrin-associated coat on vesicles departing the trans-Golgi network (TGN) and may be involved in the targeting of proteins from the trans-Golgi network (TGN) to the endosomal-lysosomal system. It is also involved in protein sorting to the basolateral membrane in epithelial cells and the proper asymmetric localization of somatodendritic proteins in neurons. AP-4 is involved in the recognition and binding of tyrosine-based sorting signals found in the cytoplasmic part of cargos, but may also recognize other types of sorting signal. In Mus musculus (Mouse), this protein is AP-4 complex subunit sigma-1.